Here is a 212-residue protein sequence, read N- to C-terminus: Inner membrane-spanning protein YciB (212 aa).

The next 6 membrane-spanning stretches (helical) occupy residues 19–39 (FYGA…PVAL), 47–67 (AIYL…ALGL), 82–102 (AVIL…FILW), 105–122 (TLVN…PLFG), 147–167 (LAWV…AYTF), and 177–197 (LFGM…YLGL).

This sequence belongs to the YciB family.

The protein resides in the cell inner membrane. Plays a role in cell envelope biogenesis, maintenance of cell envelope integrity and membrane homeostasis. The sequence is that of Inner membrane-spanning protein YciB from Thioalkalivibrio sulfidiphilus (strain HL-EbGR7).